The chain runs to 511 residues: Apolipoprotein N-acyltransferase (511 aa).

The next 6 membrane-spanning stretches (helical) occupy residues 24-44, 58-78, 90-110, 125-145, 163-183, and 192-212; these read LALA…LLYL, GWWY…VSIH, FLML…AWLW, LAFA…LTGF, VPVG…ALLV, and GASL…GLYL. The CN hydrolase domain occupies 230-470; sequence IQGNIAQELK…QGILRGEVIP (241 aa). Glutamate 269 functions as the Proton acceptor in the catalytic mechanism. The active site involves lysine 330. The active-site Nucleophile is cysteine 382. A helical membrane pass occupies residues 482–502; that stretch reads VWPLAGLAGVLLLWALLGRQL.

This sequence belongs to the CN hydrolase family. Apolipoprotein N-acyltransferase subfamily.

Its subcellular location is the cell inner membrane. It carries out the reaction N-terminal S-1,2-diacyl-sn-glyceryl-L-cysteinyl-[lipoprotein] + a glycerophospholipid = N-acyl-S-1,2-diacyl-sn-glyceryl-L-cysteinyl-[lipoprotein] + a 2-acyl-sn-glycero-3-phospholipid + H(+). It functions in the pathway protein modification; lipoprotein biosynthesis (N-acyl transfer). Functionally, catalyzes the phospholipid dependent N-acylation of the N-terminal cysteine of apolipoprotein, the last step in lipoprotein maturation. The chain is Apolipoprotein N-acyltransferase from Pseudomonas aeruginosa (strain UCBPP-PA14).